A 346-amino-acid polypeptide reads, in one-letter code: Rhomboid protein 1, mitochondrial (346 aa).

A mitochondrion-targeting transit peptide spans 1 to 73 (MSGVSSVMLG…RFFSQTSILK (73 aa)). A run of 6 helical transmembrane segments spans residues 109-129 (SMTILGLSLMAGIYFGSPYLF), 145-165 (LVYALLGINVAVFGLWQLPKC), 203-223 (MLALWSFGTSLATMLGASNFF), 246-266 (LAIVGPSLGASGALFGVLGCF), 275-295 (ILLFVFPVPGGAWVAFLASVA), and 308-328 (FDYAAHLGGSMMGVLYGWYIS). The active-site Nucleophile is Ser256. His313 is an active-site residue.

This sequence belongs to the peptidase S54 family.

The protein resides in the mitochondrion inner membrane. It catalyses the reaction Cleaves type-1 transmembrane domains using a catalytic dyad composed of serine and histidine that are contributed by different transmembrane domains.. In terms of biological role, mitochondrial rhomboid serine protease processing the mitochondrial membrane fusion regulator MGM1, and the cytochrome c peroxidase (CCP1). Required for TIM11 stability, ATP synthase complex assembly, mitochondrial morphology, cytochrome c (CYC1) storage and mitochondrial genome maintenance. The protein is Rhomboid protein 1, mitochondrial (PCP1) of Saccharomyces cerevisiae (strain ATCC 204508 / S288c) (Baker's yeast).